Reading from the N-terminus, the 505-residue chain is DEAD-box ATP-dependent RNA helicase 8 (505 aa).

The interval 1 to 85 is disordered; that stretch reads MNNRGRYPPG…GQIPGGNSNG (85 aa). Residues 20 to 31 are compositionally biased toward polar residues; the sequence is PNPNYQSRSGYQ. The segment covering 43 to 71 has biased composition (low complexity); it reads NYAQNHQQQFQQAPSQPHQYQQQQQQQQQ. The short motif at 131-159 is the Q motif element; it reads NEFEDYFLKRELLMGIYEKGFERPSPIQE. One can recognise a Helicase ATP-binding domain in the interval 162–332; that stretch reads IPIALTGRDI…DRFLTNPYVI (171 aa). Residue 175-182 coordinates ATP; that stretch reads AKNGTGKT. Threonine 237 is subject to Phosphothreonine. Positions 280–283 match the DEAD box motif; sequence DEAD. The Helicase C-terminal domain maps to 342 to 502; that stretch reads GITQFYAFVE…QIPPHIDQAI (161 aa).

The protein belongs to the DEAD box helicase family. DDX6/DHH1 subfamily.

The protein resides in the cytoplasm. The protein localises to the P-body. The enzyme catalyses ATP + H2O = ADP + phosphate + H(+). ATP-dependent RNA helicase involved in mRNA turnover, and more specifically in mRNA decapping. This Arabidopsis thaliana (Mouse-ear cress) protein is DEAD-box ATP-dependent RNA helicase 8 (RH8).